The sequence spans 242 residues: DNA repair protein RecO (242 aa).

This sequence belongs to the RecO family. As to quaternary structure, monomer.

Its function is as follows. Involved in DNA repair and RecF pathway recombination. The protein is DNA repair protein RecO of Shigella sonnei (strain Ss046).